The primary structure comprises 89 residues: Small ribosomal subunit protein uS15 (89 aa).

The segment covering 1–11 (MSITAERKAEV) has biased composition (basic and acidic residues). The segment at 1–24 (MSITAERKAEVIKTSATKAGDTGS) is disordered.

It belongs to the universal ribosomal protein uS15 family. In terms of assembly, part of the 30S ribosomal subunit. Forms a bridge to the 50S subunit in the 70S ribosome, contacting the 23S rRNA.

One of the primary rRNA binding proteins, it binds directly to 16S rRNA where it helps nucleate assembly of the platform of the 30S subunit by binding and bridging several RNA helices of the 16S rRNA. Its function is as follows. Forms an intersubunit bridge (bridge B4) with the 23S rRNA of the 50S subunit in the ribosome. The protein is Small ribosomal subunit protein uS15 of Rhodopseudomonas palustris (strain TIE-1).